Here is a 554-residue protein sequence, read N- to C-terminus: MSDSKPPKDSSSPSAAVPDVAAAAASSTPTPAPVAITPPSNPQSAHSFAQAQQRLIARRQTRDAQEAARVAAQQSESQLRARIAASQSPLLRRLGASTLSLWDTISSREGTRPAFRVGQVDAELLDEELVELMKGQVGEAVRYYGGGGGGDNNIKHEWDAEISLALRAVIFKLTIWDHDATYGAALQNLKYTDARHTGSVLVPPSKWQKGLYGLMTVGGRYMWSKWENWLREQDGGYDEPSPTVQRLSSMTDRLSTLHAAASFASFLVFLLQGRYRTLLDRVLRMRLAPPTSQVSREVSFEYLNRQLVWHAFTEFLLFVLPLVGINRWRRWLARTWRKTKKIMSTTGGEGAEEKKGEFAFLPERTCAICYQDQNQATNENELMAAATSKTGVVGSAQTDVTNPYETIPCGCVYCFVCLATRIEREEGEGWNCLRCGELVKECKPWSGDVLEHESKSPAQKTVVFADDVKDASDDEQENSQVLVQQEDDDEYPEEEGEEGGEEEEEEEEGSRSLEDLRTESASEESSEQEADSEGDESEDYEAEEEELGADLDED.

Residues methionine 1–aspartate 63 form a disordered region. Residues methionine 1–phenylalanine 115 are Peroxisomal matrix-facing. The segment covering aspartate 9–proline 38 has biased composition (low complexity). A helical membrane pass occupies residues arginine 116 to arginine 142. Over tyrosine 143–isoleucine 154 the chain is Cytoplasmic. Residues lysine 155 to alanine 180 traverse the membrane as a helical segment. Residues threonine 181–proline 204 are Peroxisomal matrix-facing. Residues serine 205–arginine 231 traverse the membrane as a helical segment. Residues glutamate 232–serine 241 are Cytoplasmic-facing. A helical membrane pass occupies residues proline 242–glutamine 272. At glycine 273–serine 299 the chain is on the peroxisomal matrix side. Residues phenylalanine 300 to valine 323 traverse the membrane as a helical segment. Over glycine 324 to aspartate 554 the chain is Cytoplasmic. The Zn(2+) site is built by cysteine 366, cysteine 369, cysteine 409, cysteine 411, cysteine 414, cysteine 417, cysteine 432, and cysteine 435. An RING-type; atypical zinc finger spans residues cysteine 366–cysteine 435. Residues aspartate 470 to aspartate 554 are disordered. Positions glutamine 485 to glutamate 508 are enriched in acidic residues. Over residues glycine 509–serine 520 the composition is skewed to basic and acidic residues. Positions alanine 521–aspartate 554 are enriched in acidic residues.

It belongs to the pex2/pex10/pex12 family. In terms of assembly, component of the PEX2-PEX10-PEX12 retrotranslocation channel, composed of PEX2, PEX10 and PEX12.

Its subcellular location is the peroxisome membrane. It catalyses the reaction [E2 ubiquitin-conjugating enzyme]-S-ubiquitinyl-L-cysteine + [acceptor protein]-L-cysteine = [E2 ubiquitin-conjugating enzyme]-L-cysteine + [acceptor protein]-S-ubiquitinyl-L-cysteine.. Its pathway is protein modification; protein ubiquitination. Functionally, E3 ubiquitin-protein ligase component of a retrotranslocation channel required for peroxisome organization by mediating export of the PEX5 receptor from peroxisomes to the cytosol, thereby promoting PEX5 recycling. The retrotranslocation channel is composed of PEX2, PEX10 and PEX12; each subunit contributing transmembrane segments that coassemble into an open channel that specifically allows the passage of PEX5 through the peroxisomal membrane. PEX2 also regulates peroxisome organization by acting as a E3 ubiquitin-protein ligase. PEX2 ubiquitinates PEX5 during its passage through the retrotranslocation channel: catalyzes monoubiquitination of PEX5 at 'Cys-6', a modification that acts as a signal for PEX5 extraction into the cytosol. Involved in caryogamy (nuclear fusion), a process required for sexual sporulation. The protein is Peroxisomal biogenesis factor 2 (PEX2) of Podospora anserina (Pleurage anserina).